Reading from the N-terminus, the 607-residue chain is ENTH domain-containing protein 1 (607 aa).

The region spanning 9–141 (NFVKNYSDAE…MDEPLLCKER (133 aa)) is the ENTH domain. The stretch at 543–574 (EAKNSISVLLREVKRAIARLHEDLSTVIQELN) forms a coiled coil.

This chain is ENTH domain-containing protein 1 (ENTHD1), found in Homo sapiens (Human).